The chain runs to 257 residues: Phycoerythrobilin:ferredoxin oxidoreductase (257 aa).

Belongs to the HY2 family.

It carries out the reaction (3Z)-phycoerythrobilin + oxidized 2[4Fe-4S]-[ferredoxin] = 15,16-dihydrobiliverdin + reduced 2[4Fe-4S]-[ferredoxin] + 2 H(+). Catalyzes the two-electron reduction of the C2 and C3(1) diene system of 15,16-dihydrobiliverdin. In Prochlorococcus marinus (strain MIT 9303), this protein is Phycoerythrobilin:ferredoxin oxidoreductase.